We begin with the raw amino-acid sequence, 686 residues long: MCFCIVSSPEAMHSNADSPSSGPGLQPVWTTLRSPYVFWIGGAILLALLVHLGIKWQQASAPVRIEYSTFLEHVESGYVERVEIVNGKRINGTYTAAAVQNDRVETRPPPAAPMGAVVDRSRRAFATHKPTAHELTAFLRRHNEAATGTGTAPVTFAATQESDWVGTLLLWGLPLGLIVGIWLFFMRRMATGGREEQIGSDTAALFEEAGGRRVTFDDVAGLAEPKEEVAEVVEFLRRPQKFTRLGGALPTGVLLVGPPGTGKTLLAKAVAGEAGVPFASISGSDFMEMFVGVGASRVRDLFDQAKERAPCIIFIDEVDAIGRTRGGPGGAGTGERDNTLNQLLVEMDGFDSDEGVVIMAATNRPDVLDAALLRPGRFDRQISIHKPDRLERADIFRVHVADLRLDASVDPEALARQTPGFAGAEIANVCNEAALLAARRGRNAVQMDDFDQALDRVMAGLERSNKLISPEERRVIAHHESGHAIVGWFLEHTDPVVKVSVVPRGLSALGHAQHLPKERDLYSREALMDRMTMALGGRGAEEIVFGRATTGAKDDLERVTETAYAMVVDYGMSDRIGPLSYNRAERRADGPLFEKPYSDAMAAAIDEEVADIVREARARANDLLREKRPLLDEMAERLLREEVLGVEALVALLGSPPHGEYAWLKEGDGTSRNSASAEGASPSSQG.

The Cytoplasmic portion of the chain corresponds to 1-33; sequence MCFCIVSSPEAMHSNADSPSSGPGLQPVWTTLR. Residues 34 to 54 form a helical membrane-spanning segment; that stretch reads SPYVFWIGGAILLALLVHLGI. The Periplasmic segment spans residues 55–164; that stretch reads KWQQASAPVR…TFAATQESDW (110 aa). Residues 165–185 form a helical membrane-spanning segment; that stretch reads VGTLLLWGLPLGLIVGIWLFF. Topologically, residues 186–686 are cytoplasmic; that stretch reads MRRMATGGRE…AEGASPSSQG (501 aa). Residue 257–264 participates in ATP binding; sequence GPPGTGKT. Histidine 479 is a Zn(2+) binding site. Glutamate 480 is an active-site residue. Residues histidine 483 and aspartate 555 each contribute to the Zn(2+) site. The tract at residues 661 to 686 is disordered; it reads YAWLKEGDGTSRNSASAEGASPSSQG. Residues 670-686 show a composition bias toward polar residues; it reads TSRNSASAEGASPSSQG.

The protein in the central section; belongs to the AAA ATPase family. It in the C-terminal section; belongs to the peptidase M41 family. Homohexamer. It depends on Zn(2+) as a cofactor.

Its subcellular location is the cell inner membrane. In terms of biological role, acts as a processive, ATP-dependent zinc metallopeptidase for both cytoplasmic and membrane proteins. Plays a role in the quality control of integral membrane proteins. The chain is ATP-dependent zinc metalloprotease FtsH 1 from Salinibacter ruber (strain M8).